The sequence spans 226 residues: Thymidylate kinase (226 aa).

20–27 (GGEGAGKS) lines the ATP pocket.

It belongs to the thymidylate kinase family.

The catalysed reaction is dTMP + ATP = dTDP + ADP. In terms of biological role, phosphorylation of dTMP to form dTDP in both de novo and salvage pathways of dTTP synthesis. The protein is Thymidylate kinase of Bradyrhizobium sp. (strain ORS 278).